The chain runs to 493 residues: Glycerol kinase (493 aa).

Residue threonine 12 coordinates ADP. ATP contacts are provided by threonine 12, threonine 13, and serine 14. Threonine 12 contributes to the sn-glycerol 3-phosphate binding site. Residue arginine 16 coordinates ADP. Residues arginine 82, glutamate 83, tyrosine 132, and aspartate 239 each coordinate sn-glycerol 3-phosphate. Residues arginine 82, glutamate 83, tyrosine 132, aspartate 239, and glutamine 240 each coordinate glycerol. ADP contacts are provided by threonine 261 and glycine 303. ATP contacts are provided by threonine 261, glycine 303, glutamine 307, and glycine 402. ADP contacts are provided by glycine 402 and asparagine 406.

It belongs to the FGGY kinase family.

The enzyme catalyses glycerol + ATP = sn-glycerol 3-phosphate + ADP + H(+). It participates in polyol metabolism; glycerol degradation via glycerol kinase pathway; sn-glycerol 3-phosphate from glycerol: step 1/1. Functionally, key enzyme in the regulation of glycerol uptake and metabolism. Catalyzes the phosphorylation of glycerol to yield sn-glycerol 3-phosphate. The chain is Glycerol kinase from Thermococcus gammatolerans (strain DSM 15229 / JCM 11827 / EJ3).